The primary structure comprises 462 residues: UPF0236 protein TTE2489 (462 aa).

This sequence belongs to the UPF0236 family.

In Caldanaerobacter subterraneus subsp. tengcongensis (strain DSM 15242 / JCM 11007 / NBRC 100824 / MB4) (Thermoanaerobacter tengcongensis), this protein is UPF0236 protein TTE2489.